The following is a 219-amino-acid chain: uncharacterized protein (219 aa).

The interval 42-71 is disordered; sequence RQPRVVPVTSSDPEVVDDEDDEDQSDDSDE. Residues 45–54 are compositionally biased toward low complexity; the sequence is RVVPVTSSDP. The span at 55 to 71 shows a compositional bias: acidic residues; that stretch reads EVVDDEDDEDQSDDSDE.

This is an uncharacterized protein from Dryophytes versicolor (chameleon treefrog).